Consider the following 217-residue polypeptide: Phosphoribosylformylglycinamidine synthase subunit PurQ (217 aa).

The Glutamine amidotransferase type-1 domain maps to 2 to 217 (NIGIIVFPGS…GKSILSTLLS (216 aa)). Cys-86 serves as the catalytic Nucleophile. Residues His-194 and Glu-196 contribute to the active site.

Part of the FGAM synthase complex composed of 1 PurL, 1 PurQ and 2 PurS subunits.

Its subcellular location is the cytoplasm. It catalyses the reaction N(2)-formyl-N(1)-(5-phospho-beta-D-ribosyl)glycinamide + L-glutamine + ATP + H2O = 2-formamido-N(1)-(5-O-phospho-beta-D-ribosyl)acetamidine + L-glutamate + ADP + phosphate + H(+). It carries out the reaction L-glutamine + H2O = L-glutamate + NH4(+). It functions in the pathway purine metabolism; IMP biosynthesis via de novo pathway; 5-amino-1-(5-phospho-D-ribosyl)imidazole from N(2)-formyl-N(1)-(5-phospho-D-ribosyl)glycinamide: step 1/2. In terms of biological role, part of the phosphoribosylformylglycinamidine synthase complex involved in the purines biosynthetic pathway. Catalyzes the ATP-dependent conversion of formylglycinamide ribonucleotide (FGAR) and glutamine to yield formylglycinamidine ribonucleotide (FGAM) and glutamate. The FGAM synthase complex is composed of three subunits. PurQ produces an ammonia molecule by converting glutamine to glutamate. PurL transfers the ammonia molecule to FGAR to form FGAM in an ATP-dependent manner. PurS interacts with PurQ and PurL and is thought to assist in the transfer of the ammonia molecule from PurQ to PurL. The chain is Phosphoribosylformylglycinamidine synthase subunit PurQ from Prochlorococcus marinus (strain NATL2A).